A 241-amino-acid polypeptide reads, in one-letter code: Caffeoyl-CoA O-methyltransferase (241 aa).

M1 bears the Blocked amino end (Met) mark. K15 is a substrate binding site. Residues T57, E79, 81–82 (GV), S87, D105, and A134 contribute to the S-adenosyl-L-methionine site. D157 serves as a coordination point for substrate. A divalent metal cation is bound at residue D157. D159 is an S-adenosyl-L-methionine binding site. Residues D183 and N184 each coordinate a divalent metal cation. N188 is a substrate binding site.

It belongs to the class I-like SAM-binding methyltransferase superfamily. Cation-dependent O-methyltransferase family. CCoAMT subfamily. Homodimer. Requires a divalent metal cation as cofactor. In terms of tissue distribution, roots and leaves.

It catalyses the reaction (E)-caffeoyl-CoA + S-adenosyl-L-methionine = (E)-feruloyl-CoA + S-adenosyl-L-homocysteine + H(+). It functions in the pathway aromatic compound metabolism; phenylpropanoid biosynthesis. Methylates caffeoyl-CoA to feruloyl-CoA and 5-hydroxyferuloyl-CoA to sinapoyl-CoA. Plays a role in the synthesis of feruloylated polysaccharides. Involved in the reinforcement of the plant cell wall. Also involved in the responding to wounding or pathogen challenge by the increased formation of cell wall-bound ferulic acid polymers. The sequence is that of Caffeoyl-CoA O-methyltransferase from Petroselinum crispum (Parsley).